The chain runs to 178 residues: Caveolin-1 (178 aa).

Residue serine 2 is modified to N-acetylserine. Serine 2 carries the phosphoserine modification. Positions 2-94 are required for homooligomerization; it reads SGGKYIDSEG…WKASFTTFTV (93 aa). The Cytoplasmic segment spans residues 2–104; sequence SGGKYIDSEG…TKYWFYRLLS (103 aa). Lysine 5 bears the N6-acetyllysine; alternate mark. Lysine 5 participates in a covalent cross-link: Glycyl lysine isopeptide (Lys-Gly) (interchain with G-Cter in ubiquitin); alternate. A Phosphotyrosine modification is found at tyrosine 6. Position 9 is a phosphoserine (serine 9). Tyrosine 14 carries the post-translational modification Phosphotyrosine; by ABL1. Position 25 is a phosphotyrosine (tyrosine 25). Glycyl lysine isopeptide (Lys-Gly) (interchain with G-Cter in ubiquitin) cross-links involve residues lysine 26, lysine 30, lysine 39, lysine 47, and lysine 57. The interval 82 to 94 is interaction with CAVIN3; that stretch reads DGIWKASFTTFTV. An intramembrane region (helical) is located at residues 105 to 125; the sequence is ALFGIPMALIWGIYFAILSFL. The Cytoplasmic portion of the chain corresponds to 126–178; sequence HIWAVVPCIRSYLIEIQCISRIYSICIHTFCDPLFEAIGKIFSNVRIALQKEI. Residues 131–142 form an interacts with SPRY1, SPRY2, SPRY3 and SPRY4 region; sequence VPCIRSYLIEIQ. S-palmitoyl cysteine attachment occurs at residues cysteine 133, cysteine 143, and cysteine 156. Residues 149–160 form an interacts with SPRY1, SPRY2, and SPRY4 region; the sequence is SICIHTFCDPLF. An interacts with SPRY1, SPRY2, SPRY3 and SPRY4 region spans residues 167 to 178; sequence FSNVRIALQKEI.

It belongs to the caveolin family. As to quaternary structure, homooligomer. Interacts with GLIPR2. Interacts with NOSTRIN. Interacts with SNAP25 and STX1A. Interacts (via the N-terminus) with DPP4; the interaction is direct. Interacts with CTNNB1, CDH1 and JUP. Interacts with PACSIN2; this interaction induces membrane tubulation. Interacts with SLC7A9. Interacts with BMX and BTK. Interacts with TGFBR1. Interacts with CAVIN3 (via leucine-zipper domain) in a cholesterol-sensitive manner. Interacts with CAVIN1. Interacts with EHD2 in a cholesterol-dependent manner. Forms a ternary complex with UBXN6 and VCP; mediates CAV1 targeting to lysosomes for degradation. Interacts with ABCG1; this interaction regulates ABCG1-mediated cholesterol efflux. Interacts with NEU3; this interaction enhances NEU3 sialidase activity within caveola. Interacts (via C-terminus) with SPRY1, SPRY2 (via C-terminus), SPRY3, and SPRY4. Interacts with IGFBP5; this interaction allows trafficking of IGFBP5 from the plasma membrane to the nucleus. Phosphorylated at Tyr-14 by ABL1 in response to oxidative stress. Post-translationally, ubiquitinated. Undergo monoubiquitination and multi- and/or polyubiquitination. Monoubiquitination of N-terminal lysines promotes integration in a ternary complex with UBXN6 and VCP which promotes oligomeric CAV1 targeting to lysosomes for degradation. Ubiquitinated by ZNRF1; leading to degradation and modulation of the TLR4-mediated immune response.

The protein resides in the golgi apparatus membrane. Its subcellular location is the cell membrane. The protein localises to the membrane. It is found in the caveola. It localises to the membrane raft. Functionally, may act as a scaffolding protein within caveolar membranes. Forms a stable heterooligomeric complex with CAV2 that targets to lipid rafts and drives caveolae formation. Mediates the recruitment of CAVIN proteins (CAVIN1/2/3/4) to the caveolae. Interacts directly with G-protein alpha subunits and can functionally regulate their activity. Involved in the costimulatory signal essential for T-cell receptor (TCR)-mediated T-cell activation. Its binding to DPP4 induces T-cell proliferation and NF-kappa-B activation in a T-cell receptor/CD3-dependent manner. Recruits CTNNB1 to caveolar membranes and may regulate CTNNB1-mediated signaling through the Wnt pathway. Negatively regulates TGFB1-mediated activation of SMAD2/3 by mediating the internalization of TGFBR1 from membrane rafts leading to its subsequent degradation. Binds 20(S)-hydroxycholesterol (20(S)-OHC). This is Caveolin-1 (CAV1) from Didelphis virginiana (North American opossum).